The sequence spans 176 residues: SELAGTIIDGASLTFEVLDKVLGELGKVSRKIAVGIDNESGGTWTALNAYFRSGTTDVILPEVVPNTKALLYSGRKSSGPVATGAVAAFAYYMSNGNTLGVMFSVPFDYNWYSNWWDVKIYPGKRRADQGMYEDMYYGNPYRGDNGWYQKNLGYGLRMKGIMTSAGEAKMQIKISR.

The tract at residues 2 to 11 (ELAGTIIDGA) is plays an important role in the hemolytic activity. Residues 10–29 (GASLTFEVLDKVLGELGKVS) are N-terminal region. Residues Ser-53, Val-86, Ser-104, Pro-106, Tyr-132, Tyr-136, and Tyr-137 each contribute to the phosphocholine site. The segment at 104–119 (SVPFDYNWYSNWWDVK) is trp-rich region, which is important for the binding to lipid membrane. The Cell attachment site signature appears at 142–144 (RGD).

In terms of assembly, octamer or nonamer in membranes. Monomer in the soluble state.

Its subcellular location is the secreted. The protein resides in the nematocyst. It localises to the target cell membrane. Functionally, pore-forming protein that forms cations-selective hydrophilic pores of around 1 nm and causes cardiac stimulation and cytolysis. Pore formation is a multi-step process that involves specific recognition of membrane sphingomyelin (but neither cholesterol nor phosphatidylcholine) using aromatic rich region and adjacent phosphocholine (POC) binding site, firm binding to the membrane (mainly driven by hydrophobic interactions) accompanied by the transfer of the N-terminal region to the lipid-water interface and finally pore formation after oligomerization of monomers. Cytolytic effects include red blood cells hemolysis, platelet aggregation and lysis, cytotoxic and cytostatic effects on fibroblasts. Lethality in mammals has been ascribed to severe vasospasm of coronary vessels, cardiac arrhythmia, and inotropic effects. The sequence is that of DELTA-stichotoxin-She4a from Stichodactyla helianthus (Sun anemone).